Consider the following 681-residue polypeptide: 2-(S-pantetheinyl)-carbapenam-3-carboxylate methyltransferase (681 aa).

The B12-binding domain occupies 1–144 (MTVPAARSGR…IERLADHPDY (144 aa)). N18, S72, Y74, V75, H103, G126, and E127 together coordinate cob(II)alamin. The 226-residue stretch at 192–417 (RDLRFYALWE…RLYVEEPGTP (226 aa)) folds into the Radical SAM core domain. Residues C206 and C210 each contribute to the [4Fe-4S] cluster site. Residue F212 participates in 5'-deoxyadenosine binding. C213 contributes to the [4Fe-4S] cluster binding site. D214 and C249 together coordinate cob(II)alamin. Q312, E349, and G384 together coordinate 5'-deoxyadenosine.

Belongs to the methyltransferase superfamily. The cofactor is [4Fe-4S] cluster. Cob(II)alamin is required as a cofactor.

It catalyses the reaction (2R,3R,5S)-2-(S-pantetheinyl)-carbapenam-3-carboxylate + AH2 + 2 S-adenosyl-L-methionine = (2R,3R,5S,6R)-6-(methyl)-2-(S-pantetheinyl)-carbapenam-3-carboxylate + 5'-deoxyadenosine + L-methionine + A + S-adenosyl-L-homocysteine + 2 H(+). It carries out the reaction (2R,3R,5S,6R)-6-(methyl)-2-(S-pantetheinyl)-carbapenam-3-carboxylate + AH2 + 2 S-adenosyl-L-methionine = (2R,3R,5S,6R)-6-(ethyl)-2-(S-pantetheinyl)-carbapenam-3-carboxylate + 5'-deoxyadenosine + L-methionine + A + S-adenosyl-L-homocysteine + 2 H(+). It functions in the pathway antibiotic biosynthesis. Its function is as follows. Methyltransferase involved in the biosynthesis of the beta-lactam carbapenem antibiotic thienamycin. Catalyzes two consecutive S-adenosyl-L-methionine-dependent methylations to build out the C6-ethyl side chain in a stereocontrolled manner. In vitro can use methyl viologen and NADPH as the iron-sulfur cluster reductants. This chain is 2-(S-pantetheinyl)-carbapenam-3-carboxylate methyltransferase, found in Streptantibioticus cattleyicolor (strain ATCC 35852 / DSM 46488 / JCM 4925 / NBRC 14057 / NRRL 8057) (Streptomyces cattleya).